Consider the following 141-residue polypeptide: Large ribosomal subunit protein uL11 (141 aa).

This sequence belongs to the universal ribosomal protein uL11 family. Part of the ribosomal stalk of the 50S ribosomal subunit. Interacts with L10 and the large rRNA to form the base of the stalk. L10 forms an elongated spine to which L12 dimers bind in a sequential fashion forming a multimeric L10(L12)X complex. In terms of processing, one or more lysine residues are methylated.

Forms part of the ribosomal stalk which helps the ribosome interact with GTP-bound translation factors. The polypeptide is Large ribosomal subunit protein uL11 (Nostoc sp. (strain PCC 7120 / SAG 25.82 / UTEX 2576)).